The primary structure comprises 404 residues: Bifunctional enzyme IspD/IspF (404 aa).

The segment at 1–243 (MQAEEQFSCG…KLTRMAIPDV (243 aa)) is 2-C-methyl-D-erythritol 4-phosphate cytidylyltransferase. The 2-C-methyl-D-erythritol 2,4-cyclodiphosphate synthase stretch occupies residues 244–404 (RTGNGYDVHQ…TVVYASGGDA (161 aa)). A divalent metal cation is bound by residues aspartate 250 and histidine 252. Residues 250–252 (DVH) and 276–277 (HS) contribute to the 4-CDP-2-C-methyl-D-erythritol 2-phosphate site. Position 284 (histidine 284) interacts with a divalent metal cation. 4-CDP-2-C-methyl-D-erythritol 2-phosphate contacts are provided by residues 298–300 (DIG), 374–377 (TTNE), phenylalanine 381, and arginine 384.

The protein in the N-terminal section; belongs to the IspD/TarI cytidylyltransferase family. IspD subfamily. It in the C-terminal section; belongs to the IspF family. A divalent metal cation serves as cofactor.

It catalyses the reaction 2-C-methyl-D-erythritol 4-phosphate + CTP + H(+) = 4-CDP-2-C-methyl-D-erythritol + diphosphate. The enzyme catalyses 4-CDP-2-C-methyl-D-erythritol 2-phosphate = 2-C-methyl-D-erythritol 2,4-cyclic diphosphate + CMP. It functions in the pathway isoprenoid biosynthesis; isopentenyl diphosphate biosynthesis via DXP pathway; isopentenyl diphosphate from 1-deoxy-D-xylulose 5-phosphate: step 2/6. The protein operates within isoprenoid biosynthesis; isopentenyl diphosphate biosynthesis via DXP pathway; isopentenyl diphosphate from 1-deoxy-D-xylulose 5-phosphate: step 4/6. Bifunctional enzyme that catalyzes the formation of 4-diphosphocytidyl-2-C-methyl-D-erythritol from CTP and 2-C-methyl-D-erythritol 4-phosphate (MEP) (IspD), and catalyzes the conversion of 4-diphosphocytidyl-2-C-methyl-D-erythritol 2-phosphate (CDP-ME2P) to 2-C-methyl-D-erythritol 2,4-cyclodiphosphate (ME-CPP) with a corresponding release of cytidine 5-monophosphate (CMP) (IspF). The chain is Bifunctional enzyme IspD/IspF from Sinorhizobium medicae (strain WSM419) (Ensifer medicae).